Consider the following 1002-residue polypeptide: Eukaryotic translation initiation factor 5B (1002 aa).

2 disordered regions span residues 1–172 and 184–402; these read MAKK…GLAA and EEQE…NKKD. Residues 13–23 are compositionally biased toward acidic residues; it reads WDEEFEEDAAQ. The segment covering 27–37 has biased composition (polar residues); the sequence is ISATPTPNPES. Over residues 47–57 the composition is skewed to low complexity; it reads EASASAEGAEA. Composition is skewed to basic and acidic residues over residues 75 to 111 and 120 to 154; these read KKVI…EQAA and QKEK…ESDK. Residues 155–172 show a composition bias toward low complexity; that stretch reads PSASAKKPAKKVPAGLAA. Basic and acidic residues-rich tracts occupy residues 184 to 252 and 267 to 276; these read EEQE…ERRR and AKKDGEENKP. The segment covering 277 to 287 has biased composition (basic residues); the sequence is KKVVYSKKKKR. Over residues 297 to 306 the composition is skewed to basic and acidic residues; sequence IKSDSKKDSE. 2 stretches are compositionally biased toward acidic residues: residues 307 to 342 and 352 to 370; these read VVPD…EETQ and DQNQ…EEEE. Positions 381–398 are enriched in low complexity; it reads STPAATPAATPTPSSASP. The 219-residue stretch at 403 to 621 folds into the tr-type G domain; sequence LRSPICCILG…LLELTQKRMS (219 aa). Ser405 bears the Phosphoserine mark. Residues 412-419 form a G1 region; that stretch reads GHVDTGKT. Residue Asp415 coordinates K(+). Asp415 is a binding site for Na(+). GTP-binding positions include 415–420, Gln431, and 437–439; these read DTGKTK and GIT. Position 419 (Thr419) interacts with Mg(2+). Gly437 provides a ligand contact to K(+). Gly437 is a Na(+) binding site. Positions 437–441 are G2; the sequence is GITQQ. Thr439 serves as a coordination point for Mg(2+). The interval 476 to 479 is G3; that stretch reads DTPG. Residues 530 to 533 and 599 to 600 contribute to the GTP site; these read NKID and AV. The interval 530 to 533 is G4; the sequence is NKID. The G5 stretch occupies residues 598–600; the sequence is SAV.

It belongs to the TRAFAC class translation factor GTPase superfamily. Classic translation factor GTPase family. IF-2 subfamily. Na(+) serves as cofactor. K(+) is required as a cofactor.

The protein resides in the cytoplasm. It carries out the reaction GTP + H2O = GDP + phosphate + H(+). Plays a role in translation initiation. Translational GTPase that catalyzes the joining of the 40S and 60S subunits to form the 80S initiation complex with the initiator methionine-tRNA in the P-site base paired to the start codon. GTP binding and hydrolysis induces conformational changes in the enzyme that renders it active for productive interactions with the ribosome. The release of the enzyme after formation of the initiation complex is a prerequisite to form elongation-competent ribosomes. Stimulates 20S pre-rRNA cleavage to mature 18S rRNA by PIN-domain endonuclease NOB1. The polypeptide is Eukaryotic translation initiation factor 5B (Saccharomyces cerevisiae (strain ATCC 204508 / S288c) (Baker's yeast)).